A 1403-amino-acid polypeptide reads, in one-letter code: Perilipin-4 (1403 aa).

Residues Met-1–Ser-21 form a disordered region. Phosphoserine occurs at positions 25 and 31. Residues Arg-33–Met-70 are disordered. Repeat copies occupy residues Gly-104–Gly-136, Gly-137–Thr-169, Gly-170–Thr-202, Gly-203–Thr-235, Gly-236–Thr-268, Gly-269–Ala-301, Gly-302–Thr-334, Gly-335–Thr-367, Gly-368–Ala-400, Gly-401–Thr-433, Gly-434–Thr-466, Gly-467–Thr-499, Gly-500–Thr-532, Gly-533–Ala-565, Gly-566–Thr-598, Gly-599–Thr-631, Gly-632–Thr-664, Gly-665–Ala-697, Gly-698–Thr-730, Gly-731–Thr-763, Gly-764–Ala-796, Gly-797–Thr-829, Gly-830–Thr-862, Gly-863–Ala-895, Gly-896–Thr-928, Gly-929–Thr-961, Gly-962–Ala-994, Gly-995–Gly-1027, and Thr-1028–Gly-1060. A 29 X 33 AA approximate tandem repeat region spans residues Gly-104–Gly-1060. A Phosphoserine modification is found at Ser-1281. Phosphothreonine is present on Thr-1287.

Belongs to the perilipin family. In terms of tissue distribution, specifically expressed in white adipose tissue and also weakly detected in heart and skeletal muscle (at protein level).

It is found in the cell membrane. It localises to the cytoplasm. The protein resides in the lipid droplet. Functionally, may play a role in triacylglycerol packaging into adipocytes. May function as a coat protein involved in the biogenesis of lipid droplets. The protein is Perilipin-4 (Plin4) of Mus musculus (Mouse).